Reading from the N-terminus, the 101-residue chain is Small ribosomal subunit protein bS6 (101 aa).

It belongs to the bacterial ribosomal protein bS6 family.

In terms of biological role, binds together with bS18 to 16S ribosomal RNA. The protein is Small ribosomal subunit protein bS6 of Nitratidesulfovibrio vulgaris (strain ATCC 29579 / DSM 644 / CCUG 34227 / NCIMB 8303 / VKM B-1760 / Hildenborough) (Desulfovibrio vulgaris).